A 323-amino-acid chain; its full sequence is UDP-N-acetylenolpyruvoylglucosamine reductase (323 aa).

The region spanning Ile33 to Gly214 is the FAD-binding PCMH-type domain. Ser243 serves as the catalytic Proton donor. The active site involves Glu315.

Belongs to the MurB family. Requires FAD as cofactor.

It localises to the cytoplasm. It catalyses the reaction UDP-N-acetyl-alpha-D-muramate + NADP(+) = UDP-N-acetyl-3-O-(1-carboxyvinyl)-alpha-D-glucosamine + NADPH + H(+). It participates in cell wall biogenesis; peptidoglycan biosynthesis. Its function is as follows. Cell wall formation. The polypeptide is UDP-N-acetylenolpyruvoylglucosamine reductase (Treponema denticola (strain ATCC 35405 / DSM 14222 / CIP 103919 / JCM 8153 / KCTC 15104)).